A 1259-amino-acid chain; its full sequence is Trafficking protein particle complex II-specific subunit 130 homolog (1259 aa).

Alanine 2 carries the post-translational modification N-acetylalanine. Positions 479 to 526 (GNIPEMFDGRPSFTEGSGLEASPRTPSSLKVQAPPMSRTNSSPGNFES) are disordered.

Belongs to the TMEM1 family. In terms of assembly, part of the multisubunit TRAPP (transport protein particle) II complex composed of BET3, BET5, TRS20, TRS23, TRS31, TRS33, TRS65, TRS85, TRS120 and TRS130.

It localises to the golgi apparatus. The protein localises to the trans-Golgi network. Its subcellular location is the early endosome. Its function is as follows. Specific subunit of the TRAPP II complex, a highly conserved vesicle tethering complex that is required for the proper transport of proteins in post-Golgi trafficking pathways to the growing cell plate in mitotic active cells. Required for the polarized and selective transport of PIN2, but not PIN1, to the plasma membrane. Not required for ER-to-Golgi as well as biosynthetic and endocytic vacuolar transport. This is Trafficking protein particle complex II-specific subunit 130 homolog from Arabidopsis thaliana (Mouse-ear cress).